The sequence spans 89 residues: MVPEAPAPFEEPLPPEATDQWQDRALCAQTDPEAFFPEKGGSTREAKKICMGCEVRHECLEYALAHDERFGIWGGLSERERRRLKRGII.

The segment covering 1–15 (MVPEAPAPFEEPLPP) has biased composition (pro residues). The disordered stretch occupies residues 1–24 (MVPEAPAPFEEPLPPEATDQWQDR). In terms of domain architecture, 4Fe-4S Wbl-type spans 26–83 (LCAQTDPEAFFPEKGGSTREAKKICMGCEVRHECLEYALAHDERFGIWGGLSERERRR). Cys27 is a binding site for [4Fe-4S] cluster. A Phosphoserine modification is found at Ser42. The [4Fe-4S] cluster site is built by Cys50, Cys53, and Cys59.

This sequence belongs to the WhiB family. [4Fe-4S] cluster is required as a cofactor. Post-translationally, may be phosphorylated, possibly on Ser-42. The cluster is degraded quickly in the presence of air. Upon cluster removal intramolecular disulfide bonds are formed. In terms of processing, the Fe-S cluster can be nitrosylated by nitric oxide (NO).

The protein localises to the cytoplasm. Functionally, acts as a transcriptional regulator. Probably redox-responsive. The apo- but not holo-form probably binds DNA. The apo-form functions as a chaperone, preventing aggregation or helping in correct refolding of a number of substrates; this activity does not require ATP or the ability to bind a Fe-S cluster. Chaperone activity is insensitive to the redox state of its cysteine residues. The apo-form has no protein disulfide reductase activity. The apo-form binds to its own promoter. This is Transcriptional regulator WhiB2 (whiB2) from Mycobacterium tuberculosis (strain ATCC 25618 / H37Rv).